The sequence spans 520 residues: AarF domain-containing protein kinase 1 (520 aa).

In terms of domain architecture, Protein kinase spans 148–455; sequence EFEKTPLGAA…GTHSSSSAFF (308 aa). ATP-binding positions include 154-162 and K176; that span reads LGAASLAQV. Catalysis depends on D308, which acts as the Proton acceptor.

It belongs to the protein kinase superfamily. ADCK protein kinase family.

It localises to the mitochondrion. Its function is as follows. Appears to be essential for maintaining mitochondrial cristae formation and mitochondrial function by acting via YME1L1 in a kinase-independent manner to regulate essential mitochondrial structural proteins OPA1 and IMMT. The action of this enzyme is not yet clear. It is not known if it has protein kinase activity and what type of substrate it would phosphorylate (Ser, Thr or Tyr). In Xenopus laevis (African clawed frog), this protein is AarF domain-containing protein kinase 1 (adck1).